The chain runs to 448 residues: MKSSKLNPVTTHKEFNGISGALGITIGLPTLTVLFYLLCNQTYSIHGINVDFAKIKSQLPITQDELWQLVFDKTCWSAYLAWFFILVILDYLLPGKSLNGVKLRDGTVLNYKINGLSMSSLLIVLLLARLFQSNSDSSLEYYLPELQFIYDNQLQLIIICFLFSFMLAVFVYIISFIPLAKPNGIGTKERILSINGNTGNPFYDWFIGRELNPRIGSWDIKLFCELRPGMLLWLLINLSCLHYQYHNLGYVTDSMIVVNLLQAFYIFDGVLNEEGCLTMIDITTDGFGFMLSFGDLAWVPWTYSLQARYLSIKGNEVNLGWTLSLLIVGLQALGFYIFRSANKQKSDFRQGKLPHLKSIQTKTGSKLLVEGWWGLSQHINYLGDWLIGLSWCLPTGFQTPLTYFYVIYFASLLIHRQVRDEMKCRAKYGEDWEKYEKLVPYKIIPYVY.

Helical transmembrane passes span Ile18–Leu38, Cys75–Gly95, Val108–Ala128, Ile157–Ile177, Val251–Leu271, Met279–Val299, and Asn318–Phe338. Residues Lys345, Arg349, Leu368, Trp373, and Asn380 to Tyr381 each bind NADP(+). The chain crosses the membrane as a helical span at residues Pro394–Ile414. NADP(+)-binding positions include Asp420, Cys424–Tyr428, and Tyr435.

The protein belongs to the ERG4/ERG24 family.

The protein resides in the endoplasmic reticulum membrane. It carries out the reaction 4,4-dimethyl-5alpha-cholesta-8,24-dien-3beta-ol + NADP(+) = 4,4-dimethyl-5alpha-cholesta-8,14,24-trien-3beta-ol + NADPH + H(+). It participates in steroid biosynthesis; zymosterol biosynthesis; zymosterol from lanosterol: step 2/6. Functionally, C-14 sterol reductase; part of the third module of ergosterol biosynthesis pathway that includes the late steps of the pathway. ERG24 reduces the C14=C15 double bond of 4,4-dimethyl-cholesta-8,14,24-trienol to produce 4,4-dimethyl-cholesta-8,24-dienol. The third module or late pathway involves the ergosterol synthesis itself through consecutive reactions that mainly occur in the endoplasmic reticulum (ER) membrane. Firstly, the squalene synthase ERG9 catalyzes the condensation of 2 farnesyl pyrophosphate moieties to form squalene, which is the precursor of all steroids. Squalene synthase is crucial for balancing the incorporation of farnesyl diphosphate (FPP) into sterol and nonsterol isoprene synthesis. Secondly, the squalene epoxidase ERG1 catalyzes the stereospecific oxidation of squalene to (S)-2,3-epoxysqualene, which is considered to be a rate-limiting enzyme in steroid biosynthesis. Then, the lanosterol synthase ERG7 catalyzes the cyclization of (S)-2,3 oxidosqualene to lanosterol, a reaction that forms the sterol core. In the next steps, lanosterol is transformed to zymosterol through a complex process involving various demethylation, reduction and desaturation reactions. The lanosterol 14-alpha-demethylase ERG11 (also known as CYP51) catalyzes C14-demethylation of lanosterol to produce 4,4'-dimethyl cholesta-8,14,24-triene-3-beta-ol, which is critical for ergosterol biosynthesis. The C-14 reductase ERG24 reduces the C14=C15 double bond of 4,4-dimethyl-cholesta-8,14,24-trienol to produce 4,4-dimethyl-cholesta-8,24-dienol. 4,4-dimethyl-cholesta-8,24-dienol is substrate of the C-4 demethylation complex ERG25-ERG26-ERG27 in which ERG25 catalyzes the three-step monooxygenation required for the demethylation of 4,4-dimethyl and 4alpha-methylsterols, ERG26 catalyzes the oxidative decarboxylation that results in a reduction of the 3-beta-hydroxy group at the C-3 carbon to an oxo group, and ERG27 is responsible for the reduction of the keto group on the C-3. ERG28 has a role as a scaffold to help anchor ERG25, ERG26 and ERG27 to the endoplasmic reticulum and ERG29 regulates the activity of the iron-containing C4-methylsterol oxidase ERG25. Then, the sterol 24-C-methyltransferase ERG6 catalyzes the methyl transfer from S-adenosyl-methionine to the C-24 of zymosterol to form fecosterol. The C-8 sterol isomerase ERG2 catalyzes the reaction which results in unsaturation at C-7 in the B ring of sterols and thus converts fecosterol to episterol. The sterol-C5-desaturase ERG3 then catalyzes the introduction of a C-5 double bond in the B ring to produce 5-dehydroepisterol. The C-22 sterol desaturase ERG5 further converts 5-dehydroepisterol into ergosta-5,7,22,24(28)-tetraen-3beta-ol by forming the C-22(23) double bond in the sterol side chain. Finally, ergosta-5,7,22,24(28)-tetraen-3beta-ol is substrate of the C-24(28) sterol reductase ERG4 to produce ergosterol. This is Delta(14)-sterol reductase ERG24 from Candida albicans (strain SC5314 / ATCC MYA-2876) (Yeast).